The following is a 213-amino-acid chain: Probable transaldolase (213 aa).

The active-site Schiff-base intermediate with substrate is Lys-83.

Belongs to the transaldolase family. Type 3B subfamily.

The protein resides in the cytoplasm. The enzyme catalyses D-sedoheptulose 7-phosphate + D-glyceraldehyde 3-phosphate = D-erythrose 4-phosphate + beta-D-fructose 6-phosphate. It participates in carbohydrate degradation; pentose phosphate pathway; D-glyceraldehyde 3-phosphate and beta-D-fructose 6-phosphate from D-ribose 5-phosphate and D-xylulose 5-phosphate (non-oxidative stage): step 2/3. In terms of biological role, transaldolase is important for the balance of metabolites in the pentose-phosphate pathway. The chain is Probable transaldolase from Oceanobacillus iheyensis (strain DSM 14371 / CIP 107618 / JCM 11309 / KCTC 3954 / HTE831).